The primary structure comprises 122 residues: Large ribosomal subunit protein bL12 (122 aa).

The protein belongs to the bacterial ribosomal protein bL12 family. In terms of assembly, homodimer. Part of the ribosomal stalk of the 50S ribosomal subunit. Forms a multimeric L10(L12)X complex, where L10 forms an elongated spine to which 2 to 4 L12 dimers bind in a sequential fashion. Binds GTP-bound translation factors.

Functionally, forms part of the ribosomal stalk which helps the ribosome interact with GTP-bound translation factors. Is thus essential for accurate translation. The sequence is that of Large ribosomal subunit protein bL12 from Clostridium botulinum (strain 657 / Type Ba4).